Consider the following 1045-residue polypeptide: MDIS1-interacting receptor like kinase 2 (1045 aa).

The first 43 residues, 1 to 43, serve as a signal peptide directing secretion; the sequence is MNKTNPERKISLTSFKERMACKEKPRDLQVLLIISIVLSCSFA. The Extracellular portion of the chain corresponds to 44–709; sequence VSATVEEANA…SKKSHKDRNL (666 aa). N-linked (GlcNAc...) asparagine glycosylation is found at N63, N77, N99, and N119. 24 LRR repeats span residues 92–116, 117–140, 141–165, 166–189, 191–212, 213–237, 238–260, 262–285, 286–309, 311–333, 334–356, 357–381, 383–405, 406–429, 431–452, 453–476, 477–501, 502–525, 527–549, 550–573, 575–597, 598–620, 621–644, and 646–670; these read LGSI…PFSS, LPNL…LWGR, FSKL…LGDL, SNLD…IGRL, KVTE…SFGN, LTKL…IGNL, PNLR…SFGN, KNVT…IGNM, TALD…LGNI, TLAV…LGEM, ESMI…SFGK, LTAL…IANS, ELTV…ICRG, GKLE…LRDC, SLIR…AFGV, YPTL…NWEQ, SQKL…IWNM, TQLS…ISNI, RISK…IRLL, TNLE…LNNL, RLYY…LTKL, SQLQ…QFRS, LQNL…SFKD, and LALT…AFRN. Residues N179 and N212 are each glycosylated (N-linked (GlcNAc...) asparagine). Residues N249, N263, and N284 are each glycosylated (N-linked (GlcNAc...) asparagine). N323 carries an N-linked (GlcNAc...) asparagine glycan. N380, N393, and N410 each carry an N-linked (GlcNAc...) asparagine glycan. N487 and N500 each carry an N-linked (GlcNAc...) asparagine glycan. N-linked (GlcNAc...) asparagine glycosylation is present at N580. N633 carries N-linked (GlcNAc...) asparagine glycosylation. N-linked (GlcNAc...) asparagine glycosylation is present at N687. Residues 710–730 traverse the membrane as a helical segment; the sequence is IIYILVPIIGAIIILSVCAGI. The Cytoplasmic portion of the chain corresponds to 731-1045; that stretch reads FICFRKRTKQ…TMLSISTAFS (315 aa). T772 bears the Phosphothreonine mark. Residues 775–1045 enclose the Protein kinase domain; that stretch reads FDPKYLIGTG…TMLSISTAFS (271 aa). Residues 781 to 789 and K802 contribute to the ATP site; that span reads IGTGGHGKV. 2 positions are modified to phosphotyrosine: Y853 and Y892. D905 serves as the catalytic Proton acceptor. S938 carries the post-translational modification Phosphoserine. Phosphotyrosine occurs at positions 946 and 953.

The protein belongs to the protein kinase superfamily. Ser/Thr protein kinase family. As to quaternary structure, interacts with MDIS1 and LURE1.2. Binds to SCOOP12; this interaction triggers the formation of complex between MIK2 and the BAK1/SERK3 and SERK4 coreceptors. As to expression, expressed in pollen tubes. Highly expressed in shoots, roots and leaves.

The protein resides in the cell membrane. It catalyses the reaction L-seryl-[protein] + ATP = O-phospho-L-seryl-[protein] + ADP + H(+). The enzyme catalyses L-threonyl-[protein] + ATP = O-phospho-L-threonyl-[protein] + ADP + H(+). In terms of biological role, acts as a receptor of SCOOP peptides from Brassicaceae plants regulating multiple processing including plant growth, development and stress responses. Perception of SCOOP peptides induces the association of MIK2 with the coreceptors BAK1/SERK3 and SERK4 and relays the signaling through the activation of receptor-like cytosolic kinases (RLCKs) BIK1 and PBL1. Also able to detect SCOOP-like proteins (SCOOPL) present in fungal Fusarium spp. and bacterial Comamonadaceae to elicit various immune responses, including growth inhibition, ROS production, calcium Ca(2+) influx, MAPK activation and MYB51 promoter activation in roots, thus being required for resistance to several root pathogens. Involved in the pollen tube perception of the female signal. Required to trigger defense responses toward generalist herbivores such as Spodoptera littoralis, probably via the activation of jasmonate and indole glucosinolate biosynthesis. This chain is MDIS1-interacting receptor like kinase 2, found in Arabidopsis thaliana (Mouse-ear cress).